The primary structure comprises 275 residues: MTVNISYLTDMDGVLIKEGEMIPGADRFLQSLTDNNVEFMVLTNNSIFTPRDLSARLKTSGLDIPPERIWTSATATAHFLKSQVKEGTAYVVGESGLTTALHTAGWILTDANPEFVVLGETRTYSFEAITTAINLILGGARFICTNPDVTGPSPSGILPATGSVAALITAATGAEPYYIGKPNPVMMRSALNTIGAHSEHTVMIGDRMDTDVKSGLEAGLSTVLVRSGISDDAEIRRYPFRPTHVINSIADLADCWDDPFGDGAFHVPDEQQFTD.

Residue aspartate 10 is the Nucleophile of the active site. Mg(2+) is bound by residues aspartate 10, aspartate 12, and aspartate 206. The Proton donor/acceptor role is filled by aspartate 12.

Belongs to the HAD-like hydrolase superfamily. Homohexamer. Mg(2+) serves as cofactor.

It catalyses the reaction dihydroxyacetone phosphate + H2O = dihydroxyacetone + phosphate. Catalyzes dephosphorylation of dihydroxyacetone phosphate (DHAP) to produce 1,3-dihydroxyacetone (DHA). Is the main enzyme responsible for DHA production from catabolism of sugars (glucose, fructose, and sucrose) in C.glutamicum. Displays no activity toward nucleoside monophosphates (AMP, CMP, GMP, or UMP). The sequence is that of Dihydroxyacetone phosphatase from Corynebacterium glutamicum (strain R).